A 249-amino-acid polypeptide reads, in one-letter code: Phosphate import ATP-binding protein PstB (249 aa).

The ABC transporter domain occupies 4 to 244 (VKIKDLSLFY…PQDKRTEDYI (241 aa)). 36–43 (GPSGCGKS) contributes to the ATP binding site.

It belongs to the ABC transporter superfamily. Phosphate importer (TC 3.A.1.7) family. As to quaternary structure, the complex is composed of two ATP-binding proteins (PstB), two transmembrane proteins (PstC and PstA) and a solute-binding protein (PstS).

It is found in the cell membrane. The catalysed reaction is phosphate(out) + ATP + H2O = ADP + 2 phosphate(in) + H(+). Functionally, part of the ABC transporter complex PstSACB involved in phosphate import. Responsible for energy coupling to the transport system. This chain is Phosphate import ATP-binding protein PstB, found in Clostridium tetani (strain Massachusetts / E88).